We begin with the raw amino-acid sequence, 249 residues long: ATP synthase subunit a (249 aa).

Helical transmembrane passes span 29–49 (ASLFMVATVAAASGFLYFATS), 84–104 (FFPFVFSLFMFVLTANLLGMF), 114–134 (IIVTFALACLVIGTVIVYGFY), 140–160 (FFGIFAPSGVPKALLPLVASI), 193–213 (FVASMGALGALGVGGAVLPLI), and 216–236 (VAMTALEFLVAFLQAYVFAVL).

Belongs to the ATPase A chain family. As to quaternary structure, F-type ATPases have 2 components, CF(1) - the catalytic core - and CF(0) - the membrane proton channel. CF(1) has five subunits: alpha(3), beta(3), gamma(1), delta(1), epsilon(1). CF(0) has three main subunits: a(1), b(2) and c(9-12). The alpha and beta chains form an alternating ring which encloses part of the gamma chain. CF(1) is attached to CF(0) by a central stalk formed by the gamma and epsilon chains, while a peripheral stalk is formed by the delta and b chains.

It localises to the cell inner membrane. In terms of biological role, key component of the proton channel; it plays a direct role in the translocation of protons across the membrane. This chain is ATP synthase subunit a, found in Agrobacterium fabrum (strain C58 / ATCC 33970) (Agrobacterium tumefaciens (strain C58)).